A 172-amino-acid chain; its full sequence is Large ribosomal subunit protein bL17 (172 aa).

The segment at 127-172 (KAAKQDRAKRVKGSKKVTGDVAPAVAPVPSAPAETQEEAKAPESAE) is disordered. Positions 147 to 159 (VAPAVAPVPSAPA) are enriched in low complexity. The span at 163 to 172 (EEAKAPESAE) shows a compositional bias: basic and acidic residues.

The protein belongs to the bacterial ribosomal protein bL17 family. As to quaternary structure, part of the 50S ribosomal subunit. Contacts protein L32.

This chain is Large ribosomal subunit protein bL17, found in Chlorobium luteolum (strain DSM 273 / BCRC 81028 / 2530) (Pelodictyon luteolum).